Reading from the N-terminus, the 570-residue chain is Molecular chaperone MKKS (570 aa).

192–199 (GHIILGKS) provides a ligand contact to ATP. Residues 198 to 370 (KSLIVPLKGQ…FHLIPNEATI (173 aa)) form a substrate-binding apical domain region.

This sequence belongs to the TCP-1 chaperonin family. In terms of assembly, component of a complex composed at least of MKKS, BBS10, BBS12, TCP1, CCT2, CCT3, CCT4, CCT5 and CCT8. Interacts with STUB1. Interacts with BBS2 (via coiled coil domain). Interacts with CCDC28B. Interacts with BBS12. Interacts with SMARCC1, a component of the SWI/SNF complexes; the interaction takes place predominantly in the cytoplasm and may modulate SMARCC1 location. Interacts with DLEC1.

The protein localises to the cytoplasm. It is found in the cytoskeleton. The protein resides in the microtubule organizing center. It localises to the centrosome. Its subcellular location is the cytosol. The protein localises to the nucleus. Probable molecular chaperone that assists the folding of proteins upon ATP hydrolysis. Plays a role in the assembly of BBSome, a complex involved in ciliogenesis regulating transports vesicles to the cilia. May play a role in protein processing in limb, cardiac and reproductive system development. May play a role in cytokinesis. In Pongo abelii (Sumatran orangutan), this protein is Molecular chaperone MKKS (MKKS).